A 567-amino-acid chain; its full sequence is TGF-beta receptor type-2 (567 aa).

An N-terminal signal peptide occupies residues 1-23 (MGRGLLRGLWPLHIVLWTRIAST). The Extracellular segment spans residues 24–166 (IPPHVPKSVN…SPDLLLVIIQ (143 aa)). 6 disulfides stabilise this stretch: Cys-51-Cys-84, Cys-54-Cys-71, Cys-61-Cys-67, Cys-77-Cys-101, Cys-121-Cys-136, and Cys-138-Cys-143. 2 N-linked (GlcNAc...) asparagine glycosylation sites follow: Asn-70 and Asn-94. Residues 167-187 (VTGVSLLPPLGIAIAVIAIFY) traverse the membrane as a helical segment. Residues 188-567 (CYRVHRQQKL…PEDGSLNTTK (380 aa)) are Cytoplasmic-facing. A Protein kinase domain is found at 244 to 546 (IELDTLVGKG…RFSELEHPDR (303 aa)). ATP contacts are provided by residues 250–258 (VGKGRFAEV) and Lys-277. Residue Asp-379 is the Proton acceptor of the active site. A phosphoserine mark is found at Ser-409, Ser-548, and Ser-553. Positions 546 to 567 (RLSGRSCSQEKIPEDGSLNTTK) are disordered.

The protein belongs to the protein kinase superfamily. TKL Ser/Thr protein kinase family. TGFB receptor subfamily. Homodimer. Heterohexamer; TGFB1, TGFB2 and TGFB3 homodimeric ligands assemble a functional receptor composed of two TGFBR1 and TGFBR2 heterodimers to form a ligand-receptor heterohexamer. The respective affinity of TGFRB1 and TGFRB2 for the ligands may modulate the kinetics of assembly of the receptor and may explain the different biological activities of TGFB1, TGFB2 and TGFB3. Component of a complex composed of TSC22D1 (via N-terminus), TGFBR1 and TGFBR2; the interaction between TSC22D1 and TGFBR1 is inhibited by SMAD7 and promoted by TGFB1. Interacts with DAXX. Interacts with DYNLT4. Interacts with ZFYVE9; ZFYVE9 recruits SMAD2 and SMAD3 to the TGF-beta receptor. Interacts with and is activated by SCUBE3; this interaction does not affect TGFB1-binding to TGFBR2. Interacts with VPS39; this interaction is independent of the receptor kinase activity and of the presence of TGF-beta. Interacts with CLU. Mg(2+) is required as a cofactor. Requires Mn(2+) as cofactor. In terms of processing, phosphorylated on a Ser/Thr residue in the cytoplasmic domain.

It localises to the cell membrane. The protein resides in the membrane raft. It catalyses the reaction L-threonyl-[receptor-protein] + ATP = O-phospho-L-threonyl-[receptor-protein] + ADP + H(+). The catalysed reaction is L-seryl-[receptor-protein] + ATP = O-phospho-L-seryl-[receptor-protein] + ADP + H(+). Functionally, transmembrane serine/threonine kinase forming with the TGF-beta type I serine/threonine kinase receptor, TGFBR1, the non-promiscuous receptor for the TGF-beta cytokines TGFB1, TGFB2 and TGFB3. Transduces the TGFB1, TGFB2 and TGFB3 signal from the cell surface to the cytoplasm and is thus regulating a plethora of physiological and pathological processes including cell cycle arrest in epithelial and hematopoietic cells, control of mesenchymal cell proliferation and differentiation, wound healing, extracellular matrix production, immunosuppression and carcinogenesis. The formation of the receptor complex composed of 2 TGFBR1 and 2 TGFBR2 molecules symmetrically bound to the cytokine dimer results in the phosphorylation and the activation of TGFRB1 by the constitutively active TGFBR2. Activated TGFBR1 phosphorylates SMAD2 which dissociates from the receptor and interacts with SMAD4. The SMAD2-SMAD4 complex is subsequently translocated to the nucleus where it modulates the transcription of the TGF-beta-regulated genes. This constitutes the canonical SMAD-dependent TGF-beta signaling cascade. Also involved in non-canonical, SMAD-independent TGF-beta signaling pathways. The chain is TGF-beta receptor type-2 (Tgfbr2) from Rattus norvegicus (Rat).